The chain runs to 196 residues: Translation machinery-associated protein 22 (196 aa).

The region spanning 111–182 is the SUI1 domain; sequence IIIKRIERNK…EAKEYIEKLL (72 aa).

Belongs to the DENR family. As to quaternary structure, interacts with the 40S ribosomal subunit.

The protein resides in the cytoplasm. This chain is Translation machinery-associated protein 22 (TMA22), found in Lodderomyces elongisporus (strain ATCC 11503 / CBS 2605 / JCM 1781 / NBRC 1676 / NRRL YB-4239) (Yeast).